The following is a 186-amino-acid chain: Elongation factor P (186 aa).

This sequence belongs to the elongation factor P family.

It is found in the cytoplasm. The protein operates within protein biosynthesis; polypeptide chain elongation. Its function is as follows. Involved in peptide bond synthesis. Stimulates efficient translation and peptide-bond synthesis on native or reconstituted 70S ribosomes in vitro. Probably functions indirectly by altering the affinity of the ribosome for aminoacyl-tRNA, thus increasing their reactivity as acceptors for peptidyl transferase. The polypeptide is Elongation factor P (Cupriavidus pinatubonensis (strain JMP 134 / LMG 1197) (Cupriavidus necator (strain JMP 134))).